The primary structure comprises 166 residues: Large ribosomal subunit protein eL14 (166 aa).

A disordered region spans residues 135-166 (KADGTPRVLKKDRRERLRAEKAKGGKKAAAKK). Residues 146–157 (DRRERLRAEKAK) show a composition bias toward basic and acidic residues.

Belongs to the eukaryotic ribosomal protein eL14 family.

This Drosophila melanogaster (Fruit fly) protein is Large ribosomal subunit protein eL14 (RpL14).